The primary structure comprises 201 residues: Glutathione peroxidase 1 (201 aa).

At Ser32 the chain carries Phosphoserine. Sec47 is a catalytic residue. Position 47 (Sec47) is a non-standard amino acid, selenocysteine. Residues Lys86 and Lys112 each carry the N6-acetyllysine; alternate modification. Residues Lys86 and Lys112 each carry the N6-succinyllysine; alternate modification. Lys119 bears the N6-acetyllysine mark. Lys146 is modified (N6-acetyllysine; alternate). An N6-succinyllysine; alternate modification is found at Lys146. Residues Ser195 and Ser199 each carry the phosphoserine modification.

Belongs to the glutathione peroxidase family. As to quaternary structure, homotetramer. Interacts with MIEN1. During periods of oxidative stress, Sec-47 may react with a superoxide radical, irreversibly lose hydroselenide and be converted to dehydroalanine. In terms of tissue distribution, expressed in liver and lung.

It is found in the cytoplasm. The protein resides in the mitochondrion. It catalyses the reaction 2 glutathione + H2O2 = glutathione disulfide + 2 H2O. The catalysed reaction is a hydroperoxy polyunsaturated fatty acid + 2 glutathione = a hydroxy polyunsaturated fatty acid + glutathione disulfide + H2O. It carries out the reaction tert-butyl hydroperoxide + 2 glutathione = tert-butanol + glutathione disulfide + H2O. The enzyme catalyses cumene hydroperoxide + 2 glutathione = 2-phenylpropan-2-ol + glutathione disulfide + H2O. It catalyses the reaction (13S)-hydroperoxy-(9Z,11E)-octadecadienoate + 2 glutathione = (13S)-hydroxy-(9Z,11E)-octadecadienoate + glutathione disulfide + H2O. The catalysed reaction is (9S)-hydroperoxy-(10E,12Z)-octadecadienoate + 2 glutathione = (9S)-hydroxy-(10E,12Z)-octadecadienoate + glutathione disulfide + H2O. It carries out the reaction (5S)-hydroperoxy-(6E,8Z,11Z,14Z)-eicosatetraenoate + 2 glutathione = (5S)-hydroxy-(6E,8Z,11Z,14Z)-eicosatetraenoate + glutathione disulfide + H2O. The enzyme catalyses (12S)-hydroperoxy-(5Z,8Z,10E,14Z)-eicosatetraenoate + 2 glutathione = (12S)-hydroxy-(5Z,8Z,10E,14Z)-eicosatetraenoate + glutathione disulfide + H2O. It catalyses the reaction (12R)-hydroperoxy-(5Z,8Z,10E,14Z)-eicosatetraenoate + 2 glutathione = (12R)-hydroxy-(5Z,8Z,10E,14Z)-eicosatetraenoate + glutathione disulfide + H2O. The catalysed reaction is (15S)-hydroperoxy-(5Z,8Z,11Z,13E)-eicosatetraenoate + 2 glutathione = (15S)-hydroxy-(5Z,8Z,11Z,13E)-eicosatetraenoate + glutathione disulfide + H2O. It carries out the reaction (5S)-hydroperoxy-(6E,8Z,11Z,14Z,17Z)-eicosapentaenoate + 2 glutathione = (5S)-hydroxy-(6E,8Z,11Z,14Z,17Z)-eicosapentaenoate + glutathione disulfide + H2O. The enzyme catalyses (12S)-hydroperoxy-(5Z,8Z,10E,14Z,17Z)-eicosapentaenoate + 2 glutathione = (12S)-hydroxy-(5Z,8Z,10E,14Z,17Z)-eicosapentaenoate + glutathione disulfide + H2O. It catalyses the reaction (15S)-hydroperoxy-(5Z,8Z,11Z,13E,17Z)-eicosapentaenoate + 2 glutathione = (15S)-hydroxy-(5Z,8Z,11Z,13E,17Z)-eicosapentaenoate + glutathione disulfide + H2O. The catalysed reaction is (15S)-hydroperoxy-(11Z,13E)-eicosadienoate + 2 glutathione = (15S)-hydroxy-(11Z,13E)-eicosadienoate + glutathione disulfide + H2O. It carries out the reaction (17S)-hydroperoxy-(4Z,7Z,10Z,13Z,15E,19Z)-docosahexaenoate + 2 glutathione = (17S)-hydroxy-(4Z,7Z,10Z,13Z,15E,19Z)-docosahexaenoate + glutathione disulfide + H2O. Functionally, catalyzes the reduction of hydroperoxides in a glutathione-dependent manner thus regulating cellular redox homeostasis. Can reduce small soluble hydroperoxides such as H2O2, cumene hydroperoxide and tert-butyl hydroperoxide, as well as several fatty acid-derived hydroperoxides. In platelets catalyzes the reduction of 12-hydroperoxyeicosatetraenoic acid, the primary product of the arachidonate 12-lipoxygenase pathway. In Rattus norvegicus (Rat), this protein is Glutathione peroxidase 1.